The following is a 1685-amino-acid chain: Phosphatidylinositol 4-phosphate 3-kinase C2 domain-containing subunit alpha (1685 aa).

Disordered regions lie at residues 1-33 (MAQI…EALQ) and 41-60 (KLQK…LSSS). Ala2 is modified (N-acetylalanine). The interval 2–142 (AQISSNSGFK…FRPTIQRGQW (141 aa)) is interaction with clathrin; sufficient to induce clathrin assembly. The segment covering 19-31 (EPTRAKDVDKEEA) has biased composition (basic and acidic residues). A compositionally biased stretch (polar residues) spans 49 to 60 (TDNQRGFELSSS). Residues Ser60, Ser108, Ser259, Ser327, and Ser338 each carry the phosphoserine modification. Residues 419-507 (NASVKVSIDI…DTEIRLQLLT (89 aa)) form the PI3K-RBD domain. The residue at position 628 (Ser628) is a Phosphoserine. The 160-residue stretch at 680–839 (TTEQLQFTIF…ERIVLQVDFP (160 aa)) folds into the C2 PI3K-type domain. The region spanning 859-1035 (QHNLETLEND…EHVLGALLSV (177 aa)) is the PIK helical domain. In terms of domain architecture, PI3K/PI4K catalytic spans 1103-1381 (SIKSCSFFSS…LIESSLGSIA (279 aa)). The tract at residues 1109–1115 (FFSSNAV) is G-loop. The tract at residues 1245–1253 (GICDRHNDN) is catalytic loop. Residues 1264–1290 (HIDFGKFLGHAQMFGTFKRDRAPFVLT) are activation loop. The 117-residue stretch at 1420–1536 (GRIKEVSVFT…TFFHPLLRDE (117 aa)) folds into the PX domain. An interaction with PtdIns(4,5)P2-containing membranes region spans residues 1486–1491 (RMVLGR). Ser1551 carries the post-translational modification Phosphoserine. In terms of domain architecture, C2 spans 1554 to 1677 (TPGQIGGAVK…NLSKETVKWY (124 aa)). The Nuclear localization signal signature appears at 1607–1618 (SKRKTKISRKTR).

Belongs to the PI3/PI4-kinase family. As to quaternary structure, part of a complex with ERBB2 and EGFR. Interacts with clathrin trimers. Interacts with SBF2/MTMR13. Ca(2+) is required as a cofactor. The cofactor is Mg(2+). Phosphorylated on Ser-259 during mitosis and upon UV irradiation; which does not change enzymatic activity but leads to proteasomal degradation. Phosphorylated upon insulin stimulation; which may lead to enzyme activation.

The protein resides in the cell membrane. It localises to the cytoplasmic vesicle. The protein localises to the clathrin-coated vesicle. Its subcellular location is the nucleus. It is found in the cytoplasm. The protein resides in the golgi apparatus. It localises to the trans-Golgi network. It catalyses the reaction a 1,2-diacyl-sn-glycero-3-phospho-(1D-myo-inositol 4-phosphate) + ATP = a 1,2-diacyl-sn-glycero-3-phospho-(1D-myo-inositol-3,4-bisphosphate) + ADP + H(+). It carries out the reaction a 1,2-diacyl-sn-glycero-3-phospho-(1D-myo-inositol) + ATP = a 1,2-diacyl-sn-glycero-3-phospho-(1D-myo-inositol-3-phosphate) + ADP + H(+). The catalysed reaction is a 1,2-diacyl-sn-glycero-3-phospho-(1D-myo-inositol-4,5-bisphosphate) + ATP = a 1,2-diacyl-sn-glycero-3-phospho-(1D-myo-inositol-3,4,5-trisphosphate) + ADP + H(+). Its activity is regulated as follows. Only slightly inhibited by wortmannin and LY294002. Activated by clathrin and insulin. Its function is as follows. Generates phosphatidylinositol 3-phosphate (PtdIns3P) and phosphatidylinositol 3,4-bisphosphate (PtdIns(3,4)P2) that act as second messengers. Has a role in several intracellular trafficking events. Functions in insulin signaling and secretion. Required for translocation of the glucose transporter SLC2A4/GLUT4 to the plasma membrane and glucose uptake in response to insulin-mediated RHOQ activation. Regulates insulin secretion through two different mechanisms: involved in glucose-induced insulin secretion downstream of insulin receptor in a pathway that involves AKT1 activation and TBC1D4/AS160 phosphorylation, and participates in the late step of insulin granule exocytosis probably in insulin granule fusion. Synthesizes PtdIns3P in response to insulin signaling. Functions in clathrin-coated endocytic vesicle formation and distribution. Regulates dynamin-independent endocytosis, probably by recruiting EEA1 to internalizing vesicles. In neurosecretory cells synthesizes PtdIns3P on large dense core vesicles. Participates in calcium induced contraction of vascular smooth muscle by regulating myosin light chain (MLC) phosphorylation through a mechanism involving Rho kinase-dependent phosphorylation of the MLCP-regulatory subunit MYPT1. May play a role in the EGF signaling cascade. May be involved in mitosis and UV-induced damage response. Required for maintenance of normal renal structure and function by supporting normal podocyte function. Involved in the regulation of ciliogenesis and trafficking of ciliary components. This chain is Phosphatidylinositol 4-phosphate 3-kinase C2 domain-containing subunit alpha (PIK3C2A), found in Pongo abelii (Sumatran orangutan).